The following is a 299-amino-acid chain: Hemolysin C homolog (299 aa).

2 consecutive CBS domains span residues Met80–Leu142 and Leu145–Glu202.

This sequence belongs to the UPF0053 family. Hemolysin C subfamily.

The protein is Hemolysin C homolog (tlyC) of Rickettsia rickettsii (strain Sheila Smith).